Here is a 951-residue protein sequence, read N- to C-terminus: Valine--tRNA ligase (951 aa).

A 'HIGH' region motif is present at residues 42-52 (PNVTGSLHMGH). The 'KMSKS' region signature appears at 554–558 (KMSKS). Position 557 (lysine 557) interacts with ATP. A coiled-coil region spans residues 880 to 914 (AGLIDKAAELDRLAKEVAKLEAEIGRIESKLSNEG).

Belongs to the class-I aminoacyl-tRNA synthetase family. ValS type 1 subfamily. In terms of assembly, monomer.

Its subcellular location is the cytoplasm. The enzyme catalyses tRNA(Val) + L-valine + ATP = L-valyl-tRNA(Val) + AMP + diphosphate. In terms of biological role, catalyzes the attachment of valine to tRNA(Val). As ValRS can inadvertently accommodate and process structurally similar amino acids such as threonine, to avoid such errors, it has a 'posttransfer' editing activity that hydrolyzes mischarged Thr-tRNA(Val) in a tRNA-dependent manner. This chain is Valine--tRNA ligase, found in Pectobacterium atrosepticum (strain SCRI 1043 / ATCC BAA-672) (Erwinia carotovora subsp. atroseptica).